The sequence spans 1128 residues: Nck-associated protein 1 (1128 aa).

Ser2 bears the N-acetylserine mark. Residues 640-665 (AVNKKSKKQTGKKGEPEREKPGVESM) form a disordered region. Residues 651–665 (KKGEPEREKPGVESM) show a composition bias toward basic and acidic residues. The helical transmembrane segment at 995 to 1015 (IACLLMVFVAVSLPTLASNVM) threads the bilayer.

This sequence belongs to the HEM-1/HEM-2 family. As to quaternary structure, component of the WAVE1 complex composed of ABI2, CYFIP1 or CYFIP2, BRK1, NCKAP1 and WASF1/WAVE1. Within the complex, a heterodimer containing NCKAP1 and CYFIP1 interacts with a heterotrimer formed by WAVE1, ABI2 and BRK1. Component of the WAVE2 complex composed of ABI1, CYFIP1/SRA1, NCKAP1/NAP1 and WASF2/WAVE2. CYFIP2 binds to activated RAC1 which causes the complex to dissociate, releasing activated WASF1. The complex can also be activated by NCK1. Associates preferentially with the first SH3 domain of NCK. Interacts with NYAP1, NYAP2 and MYO16. Interacts with TMEM132D. (Microbial infection) Interacts with human cytomegalovirus protein UL135. As to expression, expressed in all tissues examined except peripheral blood leukocytes, with highest expression in brain, heart, and skeletal muscle. Expressed in cells of various brain regions including Purkinje cells and dentate nucleus of the cerebellum, CA4 region and dentate gyrus of the hippocampus, and in frontal gray and white matter.

The protein localises to the cell membrane. It localises to the cell projection. It is found in the lamellipodium membrane. Its function is as follows. Part of the WAVE complex that regulates lamellipodia formation. The WAVE complex regulates actin filament reorganization via its interaction with the Arp2/3 complex. Actin remodeling activity is regulated by RAC1. As component of the WAVE1 complex, required for BDNF-NTRK2 endocytic trafficking and signaling from early endosomes. This is Nck-associated protein 1 (NCKAP1) from Homo sapiens (Human).